The chain runs to 160 residues: Epithelial membrane protein 1 (160 aa).

Residues 1–21 traverse the membrane as a helical segment; that stretch reads MLVLLAGLFVVHIATAIMLFV. N-linked (GlcNAc...) asparagine glycosylation is found at Asn-35 and Asn-43. The next 2 membrane-spanning stretches (helical) occupy residues 67–87 and 95–115; these read FMIL…FQLF and FFLS…GVSI. An N-linked (GlcNAc...) asparagine glycan is attached at Asn-128. Residues 137–157 traverse the membrane as a helical segment; the sequence is FILTWICFCFSFIIGILYMVL.

Belongs to the PMP-22/EMP/MP20 family.

It is found in the membrane. The protein is Epithelial membrane protein 1 (Emp1) of Mus musculus (Mouse).